The primary structure comprises 465 residues: ATP-dependent rRNA helicase rrp3 (465 aa).

The segment at methionine 1–lysine 46 is disordered. Positions glutamate 15 to glycine 29 are enriched in polar residues. A Q motif motif is present at residues lysine 46–serine 74. Residues isoleucine 77–valine 248 enclose the Helicase ATP-binding domain. Residue alanine 90–threonine 97 participates in ATP binding. A DEAD box motif is present at residues aspartate 196–aspartate 199. Residues tyrosine 275–methionine 419 enclose the Helicase C-terminal domain. Residues methionine 436–glycine 465 form a disordered region. The span at alanine 445–arginine 455 shows a compositional bias: basic residues.

Belongs to the DEAD box helicase family. DDX47/RRP3 subfamily. Interacts with the SSU processome.

The protein resides in the nucleus. It catalyses the reaction ATP + H2O = ADP + phosphate + H(+). Functionally, ATP-dependent rRNA helicase required for pre-ribosomal RNA processing. Involved in the maturation of the 35S-pre-rRNA and to its cleavage to mature 18S rRNA. This chain is ATP-dependent rRNA helicase rrp3, found in Emericella nidulans (strain FGSC A4 / ATCC 38163 / CBS 112.46 / NRRL 194 / M139) (Aspergillus nidulans).